Consider the following 124-residue polypeptide: SPbeta prophage-derived uncharacterized protein YoqO (124 aa).

Helical transmembrane passes span 54–74 (LVVI…LLSF) and 88–108 (VIFI…ISIM).

The protein localises to the cell membrane. In Bacillus subtilis (strain 168), this protein is SPbeta prophage-derived uncharacterized protein YoqO (yoqO).